The sequence spans 160 residues: Transcription elongation factor GreA (160 aa).

Positions 43–76 (LSENAEYDAAREQQRQLENKIGDLESKLTRATIL) form a coiled coil.

It belongs to the GreA/GreB family.

In terms of biological role, necessary for efficient RNA polymerase transcription elongation past template-encoded arresting sites. The arresting sites in DNA have the property of trapping a certain fraction of elongating RNA polymerases that pass through, resulting in locked ternary complexes. Cleavage of the nascent transcript by cleavage factors such as GreA or GreB allows the resumption of elongation from the new 3'terminus. GreA releases sequences of 2 to 3 nucleotides. This Chlorobium phaeobacteroides (strain BS1) protein is Transcription elongation factor GreA.